The sequence spans 94 residues: Secretoglobin family 1C member 1 (94 aa).

The N-terminal stretch at 1-22 is a signal peptide; sequence MKGSSALLVALTVLCICGLTRA.

This sequence belongs to the secretoglobin family. In terms of tissue distribution, expressed in the olfactory mucosa.

The protein resides in the secreted. The chain is Secretoglobin family 1C member 1 (Scgb1c1) from Rattus norvegicus (Rat).